We begin with the raw amino-acid sequence, 458 residues long: Jacalin-related lectin 22 (458 aa).

Jacalin-type lectin domains lie at 5-153, 160-301, and 311-453; these read YRKL…YFVL, LYKL…YFGP, and SKKL…TIVP.

Belongs to the jacalin lectin family. As to quaternary structure, component of the PYK10 complex, at least composed of PYK10/BGLU23, BGLU21, BGLU22, JAL22, JAL23, PBP1/JAL30, PBP2/JAL31, JAL32, JAL33, JAL34, JAL35, GLL22 and GLL23.

Inhibitor-type lectin that may regulate the correct polymerization and activation of BGLU23/PYK10 upon tissue damage. The polypeptide is Jacalin-related lectin 22 (JAL22) (Arabidopsis thaliana (Mouse-ear cress)).